Reading from the N-terminus, the 270-residue chain is NAD(P)H-hydrate epimerase (270 aa).

Residues 25–234 enclose the YjeF N-terminal domain; the sequence is FQQLMDLMQN…DLLAPEEIYQ (210 aa). 73–77 contributes to the (6S)-NADPHX binding site; sequence DNGGQ. The K(+) site is built by asparagine 74 and aspartate 144. Residues 148–154 and glutamate 177 each bind (6S)-NADPHX; that span reads GVGLYGH. Threonine 180 lines the K(+) pocket.

Belongs to the NnrE/AIBP family. K(+) serves as cofactor.

The catalysed reaction is (6R)-NADHX = (6S)-NADHX. It carries out the reaction (6R)-NADPHX = (6S)-NADPHX. Functionally, catalyzes the epimerization of the S- and R-forms of NAD(P)HX, a damaged form of NAD(P)H that is a result of enzymatic or heat-dependent hydration. This is a prerequisite for the S-specific NAD(P)H-hydrate dehydratase to allow the repair of both epimers of NAD(P)HX. This is NAD(P)H-hydrate epimerase from Legionella pneumophila (strain Paris).